Reading from the N-terminus, the 185-residue chain is Ribosome-recycling factor (185 aa).

The interval 145–164 is disordered; sequence DGEAGEDEVSRAEKDLDKTT.

It belongs to the RRF family.

Its subcellular location is the cytoplasm. Its function is as follows. Responsible for the release of ribosomes from messenger RNA at the termination of protein biosynthesis. May increase the efficiency of translation by recycling ribosomes from one round of translation to another. The chain is Ribosome-recycling factor from Mycobacterium sp. (strain JLS).